We begin with the raw amino-acid sequence, 572 residues long: Urease subunit alpha (572 aa).

One can recognise a Urease domain in the interval 130–572; that stretch reads GGVDTHIHFI…LPMAQRYFLF (443 aa). Ni(2+) is bound by residues H135, H137, and K218. K218 bears the N6-carboxylysine mark. H220 contacts substrate. The Ni(2+) site is built by H247 and H273. Catalysis depends on H321, which acts as the Proton donor. Residue D361 participates in Ni(2+) binding.

This sequence belongs to the metallo-dependent hydrolases superfamily. Urease alpha subunit family. As to quaternary structure, heterotrimer of UreA (gamma), UreB (beta) and UreC (alpha) subunits. Three heterotrimers associate to form the active enzyme. The cofactor is Ni cation. Carboxylation allows a single lysine to coordinate two nickel ions.

It is found in the cytoplasm. It carries out the reaction urea + 2 H2O + H(+) = hydrogencarbonate + 2 NH4(+). Its pathway is nitrogen metabolism; urea degradation; CO(2) and NH(3) from urea (urease route): step 1/1. The protein is Urease subunit alpha of Ralstonia nicotianae (strain ATCC BAA-1114 / GMI1000) (Ralstonia solanacearum).